Here is a 326-residue protein sequence, read N- to C-terminus: Flap endonuclease 1 (326 aa).

The tract at residues 1–98 (MGVQFNDSIP…KTREERRKVK (98 aa)) is N-domain. Positions 27, 80, 152, 154, 173, 175, and 224 each coordinate Mg(2+). Residues 116-245 (DMQKYAKRIN…KKALTIIKNK (130 aa)) are I-domain. Residues 318-326 (SQTSLDSWF) form an interaction with PCNA region.

Belongs to the XPG/RAD2 endonuclease family. FEN1 subfamily. As to quaternary structure, interacts with PCNA. PCNA stimulates the nuclease activity without altering cleavage specificity. Mg(2+) is required as a cofactor.

In terms of biological role, structure-specific nuclease with 5'-flap endonuclease and 5'-3' exonuclease activities involved in DNA replication and repair. During DNA replication, cleaves the 5'-overhanging flap structure that is generated by displacement synthesis when DNA polymerase encounters the 5'-end of a downstream Okazaki fragment. Binds the unpaired 3'-DNA end and kinks the DNA to facilitate 5' cleavage specificity. Cleaves one nucleotide into the double-stranded DNA from the junction in flap DNA, leaving a nick for ligation. Also involved in the base excision repair (BER) pathway. Acts as a genome stabilization factor that prevents flaps from equilibrating into structures that lead to duplications and deletions. Also possesses 5'-3' exonuclease activity on nicked or gapped double-stranded DNA. This chain is Flap endonuclease 1, found in Methanococcus aeolicus (strain ATCC BAA-1280 / DSM 17508 / OCM 812 / Nankai-3).